Consider the following 83-residue polypeptide: Beta-toxin Ct25 (83 aa).

A signal peptide spans M1 to C18. The LCN-type CS-alpha/beta domain occupies K19–G81. Disulfide bonds link C29-C80, C33-C54, C40-C61, and C44-C63. Residue G81 is modified to Glycine amide.

The protein belongs to the long (4 C-C) scorpion toxin superfamily. Sodium channel inhibitor family. Beta subfamily. As to expression, expressed by the venom gland.

It is found in the secreted. In terms of biological role, beta toxins bind voltage-independently at site-4 of sodium channels (Nav) and shift the voltage of activation toward more negative potentials thereby affecting sodium channel activation and promoting spontaneous and repetitive firing. The protein is Beta-toxin Ct25 of Centruroides tecomanus (Scorpion).